We begin with the raw amino-acid sequence, 310 residues long: tRNA dimethylallyltransferase (310 aa).

Residue 13-20 (GPTASGKT) participates in ATP binding. 15-20 (TASGKT) contacts substrate. 4 interaction with substrate tRNA regions span residues 38–41 (DSAL), 162–166 (QRLSR), 243–248 (RCVGYR), and 276–283 (KRQITWLR).

It belongs to the IPP transferase family. As to quaternary structure, monomer. Mg(2+) is required as a cofactor.

It catalyses the reaction adenosine(37) in tRNA + dimethylallyl diphosphate = N(6)-dimethylallyladenosine(37) in tRNA + diphosphate. Catalyzes the transfer of a dimethylallyl group onto the adenine at position 37 in tRNAs that read codons beginning with uridine, leading to the formation of N6-(dimethylallyl)adenosine (i(6)A). This Aliivibrio fischeri (strain MJ11) (Vibrio fischeri) protein is tRNA dimethylallyltransferase.